Here is a 316-residue protein sequence, read N- to C-terminus: Zinc finger protein 330 (316 aa).

Residues 1-24 (MPKKKTGARKKAENRREREKQLRA) form a disordered region. The short motif at 3 to 11 (KKKTGARKK) is the Nuclear localization signal element. Over residues 10–22 (KKAENRREREKQL) the composition is skewed to basic and acidic residues. 4 consecutive C4-type zinc fingers follow at residues 42 to 58 (CDKC…CYFC), 67 to 104 (CAQC…CDFC), 129 to 149 (CVEC…CSFC), and 175 to 189 (CVSC…CLRC). The tract at residues 227–299 (SMSTRSLKFG…ESSDLFNNLN (73 aa)) is disordered. Residues 268 to 291 (DDDEEEDEAEDEEEEDGKDSDAES) are compositionally biased toward acidic residues. Residue Ser287 is modified to Phosphoserine.

It belongs to the NOA36 family.

Its subcellular location is the nucleus. The protein resides in the nucleolus. It is found in the chromosome. It localises to the centromere. This is Zinc finger protein 330 (Znf330) from Mus musculus (Mouse).